A 289-amino-acid chain; its full sequence is tRNA pseudouridine synthase A (289 aa).

Catalysis depends on D53, which acts as the Nucleophile. Y119 lines the substrate pocket.

It belongs to the tRNA pseudouridine synthase TruA family. Homodimer.

It carries out the reaction uridine(38/39/40) in tRNA = pseudouridine(38/39/40) in tRNA. Formation of pseudouridine at positions 38, 39 and 40 in the anticodon stem and loop of transfer RNAs. The polypeptide is tRNA pseudouridine synthase A (Corynebacterium glutamicum (strain ATCC 13032 / DSM 20300 / JCM 1318 / BCRC 11384 / CCUG 27702 / LMG 3730 / NBRC 12168 / NCIMB 10025 / NRRL B-2784 / 534)).